A 77-amino-acid polypeptide reads, in one-letter code: Small ribosomal subunit protein bS21 (77 aa).

A compositionally biased stretch (basic and acidic residues) spans Lys-38 to Arg-52. Positions Lys-38–Lys-77 are disordered. Over residues Arg-53–Ala-62 the composition is skewed to basic residues.

The protein belongs to the bacterial ribosomal protein bS21 family.

The polypeptide is Small ribosomal subunit protein bS21 (Bartonella henselae (strain ATCC 49882 / DSM 28221 / CCUG 30454 / Houston 1) (Rochalimaea henselae)).